The sequence spans 479 residues: Catalase A (479 aa).

H63 is a catalytic residue. Heme is bound at residue Y346.

It belongs to the catalase family. It depends on heme as a cofactor.

It localises to the peroxisome matrix. The enzyme catalyses 2 H2O2 = O2 + 2 H2O. Catalyzes the degradation of hydrogen peroxide (H(2)O(2)) generated by peroxisomal oxidases to water and oxygen, thereby protecting cells from the toxic effects of hydrogen peroxide. The polypeptide is Catalase A (catA) (Botryotinia fuckeliana (Noble rot fungus)).